Here is a 564-residue protein sequence, read N- to C-terminus: Proline--tRNA ligase (564 aa).

Belongs to the class-II aminoacyl-tRNA synthetase family. ProS type 1 subfamily. Homodimer.

It is found in the cytoplasm. The enzyme catalyses tRNA(Pro) + L-proline + ATP = L-prolyl-tRNA(Pro) + AMP + diphosphate. Its function is as follows. Catalyzes the attachment of proline to tRNA(Pro) in a two-step reaction: proline is first activated by ATP to form Pro-AMP and then transferred to the acceptor end of tRNA(Pro). As ProRS can inadvertently accommodate and process non-cognate amino acids such as alanine and cysteine, to avoid such errors it has two additional distinct editing activities against alanine. One activity is designated as 'pretransfer' editing and involves the tRNA(Pro)-independent hydrolysis of activated Ala-AMP. The other activity is designated 'posttransfer' editing and involves deacylation of mischarged Ala-tRNA(Pro). The misacylated Cys-tRNA(Pro) is not edited by ProRS. The chain is Proline--tRNA ligase from Xanthomonas campestris pv. campestris (strain 8004).